A 733-amino-acid chain; its full sequence is MKKINNNKIFVLFLTILLYLLNITTAQKPVSINIKIFDQLPLYNDNFGSQSRAATIKSMVATSLNTTFKTPSLGSATSSLPSPQLFQYWFQSNFANETKNSGLNAPLTRTITLNYDSDSGNYIFNNPNFFLIDTDGFDKTASNRIYKDSTGTYHNYHYCVAFNYVFKPDGQGKEMFKFTGNDDVWVFVNNKLLLDGGGVRSPEATTVDFTKAGLVKSQETPLDFFYCERSTNSPPSFKIETNLGGLYCKAYDYCGVCNGDGGTCCNPQTDCLTQLENGTLINDKCTIPICPPLDTQIDKNLGIGFFCQHSQIPDPYAGSLCEKGECDSLTGIWTRNTSICPTDKDLAPQCRKQATCDPKLGCQSTYLCNNVCDIGTCNNGTCTQKTSNDCVQELDRGVEDKCFTYKCVPNVGCSKTPICPRGTDPCKNYTCSGGICGTVDIPQSECSCPCPGLNKCNTRICNPDNTCTLFNLTEINDGNPCTDDLCDPVTGDITHVMTTRCSGCNTCDVKTGKCVAQDSHCDDGNPCTDNACVASANSTANSQVGQCTQTPTAKCDLGDKCMVYSCTLEGGCNATQRVCPNSGACKIGYCEPGFGCKLKDRVCSSDWYCIEAQCDAKYGCIQFDRRCAPDNSKCQEGVCVNNTAIGKNDGKCISEDYDPKPFVCQKAALVSTAVIASVVVVGAVVLGAAIFAGKKGYDAWKTSQGNVMAASQANPLYTQSSNGGENPLYNSPT.

Positions 1–26 are cleaved as a signal peptide; that stretch reads MKKINNNKIFVLFLTILLYLLNITTA. N-linked (GlcNAc...) asparagine glycans are attached at residues asparagine 22, asparagine 65, and asparagine 96. Residues 27-672 are Extracellular-facing; it reads QKPVSINIKI…VCQKAALVST (646 aa). The 147-residue stretch at 114-260 folds into the PA14 domain; the sequence is NYDSDSGNYI…YDYCGVCNGD (147 aa). N-linked (GlcNAc...) asparagine glycosylation is found at asparagine 277, asparagine 336, asparagine 379, asparagine 428, asparagine 471, asparagine 537, asparagine 573, and asparagine 641. A helical membrane pass occupies residues 673-693; sequence AVIASVVVVGAVVLGAAIFAG. Residues 694 to 733 lie on the Cytoplasmic side of the membrane; sequence KKGYDAWKTSQGNVMAASQANPLYTQSSNGGENPLYNSPT.

This sequence belongs to the prespore-cell-inducing factor family.

The protein localises to the membrane. In Dictyostelium discoideum (Social amoeba), this protein is Protein psiM (psiM).